The chain runs to 689 residues: Small ribosomal subunit protein mS39 (689 aa).

The N-terminal 37 residues, 1-37 (MAVVSAVRWLGLRSRLGQPLTGRRAGLCEQARSCRFY), are a transit peptide targeting the mitochondrion. Position 126 is an N6-acetyllysine (K126). PPR repeat units follow at residues 149-183 (IKDI…GTTV), 184-219 (SLET…EALE), 255-289 (NEHS…RLHA), 290-330 (DVYT…KVKP), 331-367 (NLQT…GIEP), 368-409 (SLAT…SPKD), 412-446 (DDKF…DNWK), 454-488 (RNFY…AYFP), 489-523 (HSQT…GHTF), and 572-606 (PATS…NKIP). The disordered stretch occupies residues 665 to 689 (NLTALTSDSDTDSSSDSDSDTSEGK). Acidic residues predominate over residues 673–689 (SDTDSSSDSDSDTSEGK).

This sequence belongs to the mitochondrion-specific ribosomal protein mS39 family. Component of the mitochondrial small ribosomal subunit (mt-SSU). Mature mammalian 55S mitochondrial ribosomes consist of a small (28S) and a large (39S) subunit. The 28S small subunit contains a 12S ribosomal RNA (12S mt-rRNA) and 30 different proteins. The 39S large subunit contains a 16S rRNA (16S mt-rRNA), a copy of mitochondrial valine transfer RNA (mt-tRNA(Val)), which plays an integral structural role, and 52 different proteins. Associated with the 12S mitochondrial rRNA (12S mt-rRNA). In terms of tissue distribution, abundant in testes, skeletal muscle and heart tissue.

The protein resides in the mitochondrion. Its function is as follows. Mitochondrial RNA-binding protein that has a role in mitochondrial translation. In Homo sapiens (Human), this protein is Small ribosomal subunit protein mS39 (PTCD3).